The primary structure comprises 150 residues: Deoxyuridine 5'-triphosphate nucleotidohydrolase (150 aa).

Substrate contacts are provided by residues 69 to 71 (RSG), Asn-82, 86 to 88 (TID), and Lys-96.

Belongs to the dUTPase family. Mg(2+) is required as a cofactor.

The enzyme catalyses dUTP + H2O = dUMP + diphosphate + H(+). It participates in pyrimidine metabolism; dUMP biosynthesis; dUMP from dCTP (dUTP route): step 2/2. Its function is as follows. This enzyme is involved in nucleotide metabolism: it produces dUMP, the immediate precursor of thymidine nucleotides and it decreases the intracellular concentration of dUTP so that uracil cannot be incorporated into DNA. This chain is Deoxyuridine 5'-triphosphate nucleotidohydrolase, found in Aquifex aeolicus (strain VF5).